The chain runs to 273 residues: Flagellin FljK (273 aa).

This sequence belongs to the bacterial flagellin family. In terms of assembly, in C.crescentus, the flagellar filament is composed of multiple flagellins of 29 kDa; 27 kDa and 25 kDa.

Its subcellular location is the secreted. The protein localises to the bacterial flagellum. Flagellin is the subunit protein which polymerizes to form the filaments of bacterial flagella. In Caulobacter vibrioides (strain ATCC 19089 / CIP 103742 / CB 15) (Caulobacter crescentus), this protein is Flagellin FljK (fljK).